The chain runs to 263 residues: Glutamate racemase (263 aa).

Substrate contacts are provided by residues 13 to 14 (DS) and 45 to 46 (YG). Catalysis depends on Cys-77, which acts as the Proton donor/acceptor. 78-79 (NT) serves as a coordination point for substrate. The Proton donor/acceptor role is filled by Cys-185. 186 to 187 (TH) provides a ligand contact to substrate.

The protein belongs to the aspartate/glutamate racemases family.

The catalysed reaction is L-glutamate = D-glutamate. It participates in cell wall biogenesis; peptidoglycan biosynthesis. Provides the (R)-glutamate required for cell wall biosynthesis. The chain is Glutamate racemase from Vibrio vulnificus (strain CMCP6).